Consider the following 79-residue polypeptide: Schistosomin (79 aa).

Post-translationally, contains four disulfide bonds. In terms of tissue distribution, growth-controlling neurosecretory light green cells, in the cerebral ganglia of the CNS.

It localises to the secreted. Its function is as follows. Anti-gonadotropic neuropeptide. It also decreases the binding capacity of calfluxin to membrane-bound receptors of the albumen gland. This leads to inhibition of the reproductive activities of the infected snail. This chain is Schistosomin, found in Lymnaea stagnalis (Great pond snail).